Reading from the N-terminus, the 911-residue chain is MTEGKSIINANLTPLPDKVGVDGLEDKWRAVWDEDGTYKFRNTRDRKAVYSIDTPPPTVSGSLHVGHVFSYTHTDVIARYKRMRGYDVFYPMGWDDNGLPTERRVQNYYGVRVDVSLPYDPDFKPPFEGTDGKKIDAKDQVPISRKNFIELCERLTAQDEKLFEALWRKLGLSIDWSQTYHTIGQHPQRVAQKAFLRNLARGEAYQQDAPGLWDVTFQTAVAQAELESREYPGFYHKVAFRFEDGTPIYIETTRPELLAACTSLIANPNDERYKQYFGQYVYSPLFKVKVPILAHPAAEMDKGAGIAMCCTFGDVTDVEWWRDLKLPTRPIIQRNGRIVMDTPDWIEDPAGREVFAETAGKTTFSARKIIVDKLRESGDLDGEPTPTKRMTNFYEKGDKPLEIVTSRQWYLKNGGTDAKLNAELIERGKELEFHPDFMRVRYENWVHGLNGDWLISRQRFFGVPFPLWYPVNASGEPDYDHPITPSEDRLPIDPTIDVPEGYDESQRDVPGGFTAEKDIMDTWATSSLTPQIVTHWAEPDEASQALFKSTFPMDLRPQGQDIIRTWLFSTVDRAHLENKCLPWAHATLSGWILDPDHKKMSKSKGNVVVPNEPIEKFGADAVRYWAAAARLGLDATYDIGQMKIGRRLAIKLLNATKFALAIGREDENHHVGAAAEAAWNPADVTEPLDRAAMAKLAVVVRQATEALESYEHSKALEVIESYFWQFCDDYIELVKNRAYGTPDEHGNVPSEKAVKSARTALGLGLDAFARLLAPYLPYATEEVWSWMHAGSGSVHRAAWPVVDPYVEAATGASPELLTWAGKAVEQLRKIKSEAKVSMKTPILSVALSAASEGVDAIHAALGDIAQAGRVVGKFDLVAKHAEESAAEDAPETEVAVEASELGEPPVKKPKH.

The short motif at 57-67 is the 'HIGH' region element; it reads PTVSGSLHVGH. Positions 599-603 match the 'KMSKS' region motif; that stretch reads KMSKS. Residue Lys-602 coordinates ATP. A disordered region spans residues 882–911; the sequence is EESAAEDAPETEVAVEASELGEPPVKKPKH.

Belongs to the class-I aminoacyl-tRNA synthetase family. ValS type 2 subfamily. Monomer.

It is found in the cytoplasm. The catalysed reaction is tRNA(Val) + L-valine + ATP = L-valyl-tRNA(Val) + AMP + diphosphate. Functionally, catalyzes the attachment of valine to tRNA(Val). As ValRS can inadvertently accommodate and process structurally similar amino acids such as threonine, to avoid such errors, it has a 'posttransfer' editing activity that hydrolyzes mischarged Thr-tRNA(Val) in a tRNA-dependent manner. In Bifidobacterium longum subsp. infantis (strain ATCC 15697 / DSM 20088 / JCM 1222 / NCTC 11817 / S12), this protein is Valine--tRNA ligase.